We begin with the raw amino-acid sequence, 163 residues long: EF-hand calcium-binding domain-containing protein 11 (163 aa).

3 EF-hand domains span residues serine 18–tyrosine 53, arginine 91–lysine 126, and leucine 127–glutamate 162. Residues aspartate 140, aspartate 142, aspartate 144, histidine 146, and aspartate 151 each coordinate Ca(2+).

This Homo sapiens (Human) protein is EF-hand calcium-binding domain-containing protein 11 (EFCAB11).